The primary structure comprises 151 residues: UPF0178 protein PFLU_5917 (151 aa).

This sequence belongs to the UPF0178 family.

This is UPF0178 protein PFLU_5917 from Pseudomonas fluorescens (strain SBW25).